We begin with the raw amino-acid sequence, 215 residues long: uncharacterized protein (215 aa).

Residues leucine 25–glutamine 48 form a disordered region. Residues serine 27–alanine 47 are compositionally biased toward low complexity.

This is an uncharacterized protein from Homo sapiens (Human).